Here is a 70-residue protein sequence, read N- to C-terminus: Small ribosomal subunit protein bS21 (70 aa).

Belongs to the bacterial ribosomal protein bS21 family.

This chain is Small ribosomal subunit protein bS21, found in Cupriavidus pinatubonensis (strain JMP 134 / LMG 1197) (Cupriavidus necator (strain JMP 134)).